The chain runs to 372 residues: Cytochrome b (372 aa).

4 helical membrane-spanning segments follow: residues 25-45 (FGSM…FLAI), 69-90 (WIMQ…YIHI), 105-125 (WLSG…GYVL), and 170-190 (FFAL…IHII). 2 residues coordinate heme b: His-75 and His-89. Positions 174 and 188 each coordinate heme b. Residue His-193 coordinates a ubiquinone. 4 helical membrane-spanning segments follow: residues 218–238 (YKDM…LSFS), 280–300 (LGGT…PFTH), 312–332 (LTQT…WTAT), and 339–358 (FISI…IINP).

This sequence belongs to the cytochrome b family. The cytochrome bc1 complex contains 3 respiratory subunits (MT-CYB, CYC1 and UQCRFS1), 2 core proteins (UQCRC1 and UQCRC2) and probably 6 low-molecular weight proteins. The cofactor is heme b.

It is found in the mitochondrion inner membrane. Functionally, component of the ubiquinol-cytochrome c reductase complex (complex III or cytochrome b-c1 complex) that is part of the mitochondrial respiratory chain. The b-c1 complex mediates electron transfer from ubiquinol to cytochrome c. Contributes to the generation of a proton gradient across the mitochondrial membrane that is then used for ATP synthesis. This chain is Cytochrome b (MT-CYB), found in Dendroaspis polylepis polylepis (Black mamba).